We begin with the raw amino-acid sequence, 594 residues long: Protein REBELOTE (594 aa).

The span at 1–13 shows a compositional bias: basic residues; sequence MGKLGKKARKFAK. Disordered regions lie at residues 1–21 and 35–58; these read MGKL…SVEK and AKRN…PKKR. 3 short sequence motifs (nuclear localization signal) span residues 8 to 15, 35 to 42, and 512 to 519; these read ARKFAKKN, AKRNERHQ, and LKKFHERS. Residues 36–58 are compositionally biased toward basic and acidic residues; it reads KRNERHQAGDKQEKKVEQQPKKR.

It belongs to the NOC2 family. Interacts with SWA2, NOC2 and NOC3 in both the nucleolus and nucleoplasm. Binds to ENAP1 and OBE1. In terms of tissue distribution, expressed at low levels in roots, shoots, leaves, stems, inflorescences, flowers and siliques, with highest levels dividing tissues.

It is found in the nucleus. The protein resides in the nucleolus. The protein localises to the nucleoplasm. Its function is as follows. Collaboratively with CYP40/SQN and ULT1, influences floral meristem (FM) determinacy in an AGAMOUS and SUPERMAN-dependent manner, thus contributing to the floral developmental homeostasis. This chain is Protein REBELOTE, found in Arabidopsis thaliana (Mouse-ear cress).